Here is a 350-residue protein sequence, read N- to C-terminus: S-adenosylmethionine:tRNA ribosyltransferase-isomerase (350 aa).

The protein belongs to the QueA family. As to quaternary structure, monomer.

The protein localises to the cytoplasm. The enzyme catalyses 7-aminomethyl-7-carbaguanosine(34) in tRNA + S-adenosyl-L-methionine = epoxyqueuosine(34) in tRNA + adenine + L-methionine + 2 H(+). The protein operates within tRNA modification; tRNA-queuosine biosynthesis. Functionally, transfers and isomerizes the ribose moiety from AdoMet to the 7-aminomethyl group of 7-deazaguanine (preQ1-tRNA) to give epoxyqueuosine (oQ-tRNA). The sequence is that of S-adenosylmethionine:tRNA ribosyltransferase-isomerase from Bacillus thuringiensis subsp. konkukian (strain 97-27).